A 303-amino-acid chain; its full sequence is Foldase protein PrsA (303 aa).

The N-terminal stretch at M1 to G20 is a signal peptide. C21 carries N-palmitoyl cysteine lipidation. C21 carries S-diacylglycerol cysteine lipidation. The PpiC domain maps to E137–K233.

The protein belongs to the PrsA family.

It is found in the cell membrane. The enzyme catalyses [protein]-peptidylproline (omega=180) = [protein]-peptidylproline (omega=0). Functionally, plays a major role in protein secretion by helping the post-translocational extracellular folding of several secreted proteins. The sequence is that of Foldase protein PrsA from Latilactobacillus sakei subsp. sakei (strain 23K) (Lactobacillus sakei subsp. sakei).